A 93-amino-acid chain; its full sequence is Large ribosomal subunit protein uL23cz/uL23cy (93 aa).

It belongs to the universal ribosomal protein uL23 family. Part of the 50S ribosomal subunit.

It is found in the plastid. It localises to the chloroplast. In terms of biological role, binds to 23S rRNA. The chain is Large ribosomal subunit protein uL23cz/uL23cy (rpl23-A) from Arabidopsis thaliana (Mouse-ear cress).